A 104-amino-acid polypeptide reads, in one-letter code: Integration host factor subunit alpha (104 aa).

The disordered stretch occupies residues 51–70 (GNFQLRDKPQRPGRNPKTGE).

It belongs to the bacterial histone-like protein family. As to quaternary structure, heterodimer of an alpha and a beta chain.

Its function is as follows. This protein is one of the two subunits of integration host factor, a specific DNA-binding protein that functions in genetic recombination as well as in transcriptional and translational control. This is Integration host factor subunit alpha from Ralstonia nicotianae (strain ATCC BAA-1114 / GMI1000) (Ralstonia solanacearum).